The chain runs to 1137 residues: Nonsense-mediated mRNA decay factor SMG7 (1137 aa).

N-acetylserine is present on Ser-2. 2 TPR repeats span residues Gln-152–Asn-185 and Gln-187–Phe-219. Ser-520 bears the Phosphoserine mark. Residues Glu-620 to Lys-631 show a composition bias toward basic and acidic residues. Disordered stretches follow at residues Glu-620 to Phe-646, Leu-696 to Ala-794, Ile-890 to Met-911, Pro-988 to Gly-1055, Ser-1069 to Glu-1089, and Ser-1104 to His-1137. Thr-624 bears the Phosphothreonine mark. Composition is skewed to polar residues over residues Pro-633 to Phe-646 and Leu-696 to Arg-722. Over residues Pro-723–Ser-770 the composition is skewed to low complexity. Phosphoserine is present on residues Ser-781 and Ser-897. Residues Pro-988–Thr-998 show a composition bias toward polar residues. Positions Pro-999–Pro-1025 are enriched in low complexity. The segment covering Asp-1036–Lys-1050 has biased composition (basic and acidic residues). Over residues Ser-1069–Trp-1081 the composition is skewed to polar residues. A compositionally biased stretch (low complexity) spans Gln-1117–Gly-1131.

In terms of assembly, part of a complex that contains SMG5, SMG7, PPP2CA, a short isoform of UPF3A (isoform UPF3AS, but not isoform UPF3AL) and phosphorylated UPF1. Interacts with DHX34; the interaction is RNA-independent.

It is found in the cytoplasm. It localises to the nucleus. Plays a role in nonsense-mediated mRNA decay. Recruits UPF1 to cytoplasmic mRNA decay bodies. Together with SMG5 is thought to provide a link to the mRNA degradation machinery involving exonucleolytic pathways, and to serve as an adapter for UPF1 to protein phosphatase 2A (PP2A), thereby triggering UPF1 dephosphorylation. The chain is Nonsense-mediated mRNA decay factor SMG7 from Homo sapiens (Human).